The following is a 132-amino-acid chain: Fluoride-specific ion channel FluC 2 (132 aa).

A run of 4 helical transmembrane segments spans residues valine 5–glycine 25, threonine 34–alanine 54, proline 59–phenylalanine 79, and valine 95–isoleucine 115. The Na(+) site is built by glycine 71 and threonine 74.

Belongs to the fluoride channel Fluc/FEX (TC 1.A.43) family.

Its subcellular location is the cell membrane. It carries out the reaction fluoride(in) = fluoride(out). Its activity is regulated as follows. Na(+) is not transported, but it plays an essential structural role and its presence is essential for fluoride channel function. Its function is as follows. Fluoride-specific ion channel. Important for reducing fluoride concentration in the cell, thus reducing its toxicity. The chain is Fluoride-specific ion channel FluC 2 from Bacillus licheniformis (strain ATCC 14580 / DSM 13 / JCM 2505 / CCUG 7422 / NBRC 12200 / NCIMB 9375 / NCTC 10341 / NRRL NRS-1264 / Gibson 46).